Here is a 175-residue protein sequence, read N- to C-terminus: Small ribosomal subunit protein uS5 (175 aa).

An S5 DRBM domain is found at 11 to 74; the sequence is LSEVLVDVNR…QAAKKRMMKV (64 aa).

This sequence belongs to the universal ribosomal protein uS5 family. Part of the 30S ribosomal subunit. Contacts proteins S4 and S8.

Its function is as follows. With S4 and S12 plays an important role in translational accuracy. In terms of biological role, located at the back of the 30S subunit body where it stabilizes the conformation of the head with respect to the body. This chain is Small ribosomal subunit protein uS5, found in Rickettsia prowazekii (strain Madrid E).